Consider the following 463-residue polypeptide: Asparagine--tRNA ligase (463 aa).

The protein belongs to the class-II aminoacyl-tRNA synthetase family. In terms of assembly, homodimer.

It localises to the cytoplasm. The catalysed reaction is tRNA(Asn) + L-asparagine + ATP = L-asparaginyl-tRNA(Asn) + AMP + diphosphate + H(+). In Clostridium kluyveri (strain ATCC 8527 / DSM 555 / NBRC 12016 / NCIMB 10680 / K1), this protein is Asparagine--tRNA ligase.